The sequence spans 145 residues: Large ribosomal subunit protein uL16 (145 aa).

The span at 1–21 (MLVPTRVKHRKQHRGRMHGKA) shows a compositional bias: basic residues. Residues 1-22 (MLVPTRVKHRKQHRGRMHGKAT) are disordered.

This sequence belongs to the universal ribosomal protein uL16 family. Part of the 50S ribosomal subunit.

In terms of biological role, binds 23S rRNA and is also seen to make contacts with the A and possibly P site tRNAs. This is Large ribosomal subunit protein uL16 from Desulfitobacterium hafniense (strain Y51).